Reading from the N-terminus, the 131-residue chain is Meiotically up-regulated gene 115 protein (131 aa).

It is found in the mitochondrion. Its subcellular location is the nucleus. Functionally, has a role in meiosis. This Schizosaccharomyces pombe (strain 972 / ATCC 24843) (Fission yeast) protein is Meiotically up-regulated gene 115 protein (mug115).